The chain runs to 193 residues: Peptidyl-tRNA hydrolase (193 aa).

Position 18 (Tyr18) interacts with tRNA. His23 serves as the catalytic Proton acceptor. TRNA is bound by residues Phe69, Asn71, and Asn117.

It belongs to the PTH family. As to quaternary structure, monomer.

It is found in the cytoplasm. It carries out the reaction an N-acyl-L-alpha-aminoacyl-tRNA + H2O = an N-acyl-L-amino acid + a tRNA + H(+). Its function is as follows. Hydrolyzes ribosome-free peptidyl-tRNAs (with 1 or more amino acids incorporated), which drop off the ribosome during protein synthesis, or as a result of ribosome stalling. In terms of biological role, catalyzes the release of premature peptidyl moieties from peptidyl-tRNA molecules trapped in stalled 50S ribosomal subunits, and thus maintains levels of free tRNAs and 50S ribosomes. The chain is Peptidyl-tRNA hydrolase from Teredinibacter turnerae (strain ATCC 39867 / T7901).